The primary structure comprises 317 residues: Beta-ketoacyl-[acyl-carrier-protein] synthase III (317 aa).

Catalysis depends on residues C112 and H244. Positions 245-249 (QANVR) are ACP-binding. Residue N274 is part of the active site.

Belongs to the thiolase-like superfamily. FabH family. In terms of assembly, homodimer.

Its subcellular location is the cytoplasm. It carries out the reaction malonyl-[ACP] + acetyl-CoA + H(+) = 3-oxobutanoyl-[ACP] + CO2 + CoA. Its pathway is lipid metabolism; fatty acid biosynthesis. In terms of biological role, catalyzes the condensation reaction of fatty acid synthesis by the addition to an acyl acceptor of two carbons from malonyl-ACP. Catalyzes the first condensation reaction which initiates fatty acid synthesis and may therefore play a role in governing the total rate of fatty acid production. Possesses both acetoacetyl-ACP synthase and acetyl transacylase activities. Its substrate specificity determines the biosynthesis of branched-chain and/or straight-chain of fatty acids. In Rickettsia bellii (strain OSU 85-389), this protein is Beta-ketoacyl-[acyl-carrier-protein] synthase III.